A 159-amino-acid chain; its full sequence is Early E3 18.5 kDa glycoprotein (159 aa).

Residues 1–17 (MRYMILGLLALAAVCSA) form the signal peptide. The Lumenal segment spans residues 18 to 123 (AKKVEFKEPA…PPQKCLENTG (106 aa)). 2 cysteine pairs are disulfide-bonded: Cys28/Cys45 and Cys39/Cys100. Residues Asn29 and Asn78 are each glycosylated (N-linked (GlcNAc...) asparagine; by host). Residues 124 to 144 (TFCSTALLITALALVCTLLYL) traverse the membrane as a helical segment. The Cytoplasmic segment spans residues 145–159 (KYKSRRSFIDEKKMP). Residues 156–159 (KKMP) carry the Di-lysine motif motif.

The protein belongs to the adenoviridae E19 family. Both disulfide bonds are absolutely critical for the interaction with MHC antigens. Post-translationally, N-glycosylated; high-mannose.

The protein localises to the host endoplasmic reticulum membrane. Binds and retains class I heavy chains in the endoplasmic reticulum during the early period of virus infection, thereby impairing their transport to the cell surface. Also delays the expression of class I alleles that it cannot affect by direct retention. Binds transporters associated with antigen processing (TAP) and acts as a tapasin inhibitor, preventing class I/TAP association. In consequence, infected cells are masked for immune recognition by cytotoxic T-lymphocytes. The chain is Early E3 18.5 kDa glycoprotein from Homo sapiens (Human).